A 147-amino-acid polypeptide reads, in one-letter code: D-aminoacyl-tRNA deacylase (147 aa).

The Gly-cisPro motif, important for rejection of L-amino acids motif lies at 136–137; that stretch reads GP.

This sequence belongs to the DTD family. In terms of assembly, homodimer.

The protein localises to the cytoplasm. It carries out the reaction glycyl-tRNA(Ala) + H2O = tRNA(Ala) + glycine + H(+). It catalyses the reaction a D-aminoacyl-tRNA + H2O = a tRNA + a D-alpha-amino acid + H(+). In terms of biological role, an aminoacyl-tRNA editing enzyme that deacylates mischarged D-aminoacyl-tRNAs. Also deacylates mischarged glycyl-tRNA(Ala), protecting cells against glycine mischarging by AlaRS. Acts via tRNA-based rather than protein-based catalysis; rejects L-amino acids rather than detecting D-amino acids in the active site. By recycling D-aminoacyl-tRNA to D-amino acids and free tRNA molecules, this enzyme counteracts the toxicity associated with the formation of D-aminoacyl-tRNA entities in vivo and helps enforce protein L-homochirality. The protein is D-aminoacyl-tRNA deacylase of Streptococcus uberis (strain ATCC BAA-854 / 0140J).